The primary structure comprises 440 residues: Elongation factor 1-alpha (440 aa).

In terms of domain architecture, tr-type G spans 5–228 (KPHINLVVIG…ALDTYIQPPK (224 aa)). The G1 stretch occupies residues 14–21 (GHVDHGKS). Residue 14 to 21 (GHVDHGKS) participates in GTP binding. Ser21 lines the Mg(2+) pocket. Residues 70–74 (GVTID) are G2. The tract at residues 91–94 (DAPG) is G3. GTP contacts are provided by residues 91-95 (DAPGH) and 153-156 (NKMD). The interval 153 to 156 (NKMD) is G4. The interval 194–196 (SAW) is G5.

It belongs to the TRAFAC class translation factor GTPase superfamily. Classic translation factor GTPase family. EF-Tu/EF-1A subfamily.

It is found in the cytoplasm. It catalyses the reaction GTP + H2O = GDP + phosphate + H(+). GTP hydrolase that promotes the GTP-dependent binding of aminoacyl-tRNA to the A-site of ribosomes during protein biosynthesis. The protein is Elongation factor 1-alpha of Hyperthermus butylicus (strain DSM 5456 / JCM 9403 / PLM1-5).